The sequence spans 62 residues: uncharacterized protein (62 aa).

The tract at residues 1-62 is disordered; it reads MTSTQNLKDK…PPKKSLSQLP (62 aa). Basic and acidic residues predominate over residues 7–29; the sequence is LKDKFEEEIRQQKEGKGKKEKVW. Polar residues predominate over residues 32-43; it reads HSDSSYNKQTAV.

This is an uncharacterized protein from Dictyostelium discoideum (Social amoeba).